Consider the following 464-residue polypeptide: Cytochrome P450 85A1 (464 aa).

A helical membrane pass occupies residues 2-22 (AFFLIFLSSFFGLCIFCTALL). Heme is bound at residue Cys414.

It belongs to the cytochrome P450 family. Heme serves as cofactor. As to expression, expressed in sub-meristematic regions of shoot and root apexes, in zones undergoing lateral root formation, in fruits, and in all flower parts, with a high expression in young flower buds and at the joint in the pedicel.

It localises to the membrane. It catalyses the reaction 6-deoxocastasterone + reduced [NADPH--hemoprotein reductase] + O2 = 6alpha-hydroxycastasterone + oxidized [NADPH--hemoprotein reductase] + H2O + H(+). The enzyme catalyses 6alpha-hydroxycastasterone + reduced [NADPH--hemoprotein reductase] + O2 = castasterone + oxidized [NADPH--hemoprotein reductase] + 2 H2O + H(+). It carries out the reaction 6-deoxocastasterone + 2 reduced [NADPH--hemoprotein reductase] + 2 O2 = castasterone + 2 oxidized [NADPH--hemoprotein reductase] + 3 H2O + 2 H(+). It participates in plant hormone biosynthesis; brassinosteroid biosynthesis. In terms of biological role, catalyzes the C6-oxidation step in brassinosteroids biosynthesis. Converts 6-deoxocastasterone (6-deoxoCS) to castasterone (CS). May also convert 6-deoxoteasterone (6-deoxoTE) to teasterone (TE), 3-dehydro-6-deoxoteasterone (6-deoxo3DT, 6-deoxo3DHT) to 3-dehydroteasterone (3DT, 3-DHT), and 6-deoxotyphasterol (6-deoxoTY) to typhasterol (TY), but not castasterone (CS) to brassinolide (BL). This is Cytochrome P450 85A1 from Solanum lycopersicum (Tomato).